Reading from the N-terminus, the 224-residue chain is Biotin transport ATP-binding protein BioM (224 aa).

One can recognise an ABC transporter domain in the interval 3–224 (IQFESAGVSF…AIARYREIAA (222 aa)). ATP is bound at residue 34-41 (GLNGSGKT).

The protein belongs to the ABC transporter superfamily. As to quaternary structure, part of a biotin transporter complex composed of BioM, BioN and BioY.

Its subcellular location is the cell inner membrane. Its function is as follows. Involved in biotin uptake. This Rhizobium etli (strain ATCC 51251 / DSM 11541 / JCM 21823 / NBRC 15573 / CFN 42) protein is Biotin transport ATP-binding protein BioM (bioM).